The primary structure comprises 603 residues: Variable flagella 3 (603 aa).

Residues 169–289 (GGEVSAELRR…TEDLEARDRR (121 aa)) adopt a coiled-coil conformation. Basic and acidic residues predominate over residues 288-297 (RRMNSTDRIR). Disordered regions lie at residues 288-526 (RRMN…PARA) and 539-564 (AGRG…SSKS). Residues 337–348 (SRSNSRGRGTSS) show a composition bias toward low complexity. The span at 364 to 380 (PRFDPTEYVRQRKERES) shows a compositional bias: basic and acidic residues. Residues 397-406 (AGTSRASSVV) show a composition bias toward polar residues. The segment covering 486–510 (GASGGGAGGWSKFPGGGGGGVGGSG) has biased composition (gly residues). The span at 511–520 (QRISSNSPRS) shows a compositional bias: polar residues.

It belongs to the CCDC61 family.

Its subcellular location is the cytoplasm. The protein localises to the cytoskeleton. It is found in the flagellum basal body. Required for normal flagella and striated fiber formation. This chain is Variable flagella 3, found in Chlamydomonas reinhardtii (Chlamydomonas smithii).